A 104-amino-acid chain; its full sequence is Large ribosomal subunit protein bL21 (104 aa).

It belongs to the bacterial ribosomal protein bL21 family. In terms of assembly, part of the 50S ribosomal subunit. Contacts protein L20.

This protein binds to 23S rRNA in the presence of protein L20. The protein is Large ribosomal subunit protein bL21 of Leptospira borgpetersenii serovar Hardjo-bovis (strain JB197).